The chain runs to 267 residues: Hydroxynaphthalene reductase-like protein Arp2 (267 aa).

Positions 25, 45, 71, and 98 each coordinate NADP(+). Active-site proton donor residues include Ser-147 and Ser-148. Residues Tyr-162, Lys-166, Val-195, and Thr-197 each contribute to the NADP(+) site. Tyr-162 (proton acceptor) is an active-site residue. Catalysis depends on Lys-166, which acts as the Lowers pKa of active site Tyr.

It belongs to the short-chain dehydrogenases/reductases (SDR) family.

Hydroxynaphthalene reductase-like protein; part of the Pks2 gene cluster that mediates the formation of infectious structures (appressoria), enabling these fungi to kill insects faster. The product of the Pks2 gene cluster is different from the one of Pks1 and has still not been identified. This chain is Hydroxynaphthalene reductase-like protein Arp2, found in Metarhizium anisopliae (strain ARSEF 549).